A 113-amino-acid chain; its full sequence is Ribonuclease P protein component (113 aa).

The protein belongs to the RnpA family. As to quaternary structure, consists of a catalytic RNA component (M1 or rnpB) and a protein subunit.

The enzyme catalyses Endonucleolytic cleavage of RNA, removing 5'-extranucleotides from tRNA precursor.. In terms of biological role, RNaseP catalyzes the removal of the 5'-leader sequence from pre-tRNA to produce the mature 5'-terminus. It can also cleave other RNA substrates such as 4.5S RNA. The protein component plays an auxiliary but essential role in vivo by binding to the 5'-leader sequence and broadening the substrate specificity of the ribozyme. This chain is Ribonuclease P protein component, found in Clostridium novyi (strain NT).